The following is a 525-amino-acid chain: Beta-galactoside alpha-2,6-sialyltransferase 2 (525 aa).

Topologically, residues 1–11 (MKPHLKQWRQR) are cytoplasmic. The chain crosses the membrane as a helical; Signal-anchor for type II membrane protein span at residues 12-32 (MLFAIFVWGLLFLAIFIYFTN). The Lumenal segment spans residues 33 to 525 (SNPAAPMPSS…PVTRPNNTNT (493 aa)). Disordered regions lie at residues 85 to 107 (SASPFNSWPGDPQKGDQAQDGFD) and 145 to 183 (RQGALGLPSPGESSWQSGPGQPKQEKLRHPRRGSLPEEA). Intrachain disulfides connect Cys249-Cys515, Cys292-Cys444, and Cys462-Cys473. N-linked (GlcNAc...) asparagine glycans are attached at residues Asn303 and Asn333. N-linked (GlcNAc...) asparagine glycosylation occurs at Asn521.

The protein belongs to the glycosyltransferase 29 family.

The protein localises to the golgi apparatus. It localises to the golgi stack membrane. The catalysed reaction is a beta-D-galactoside + CMP-N-acetyl-beta-neuraminate = an N-acetyl-alpha-neuraminyl-(2-&gt;6)-beta-D-galactosyl derivative + CMP + H(+). Its function is as follows. Transfers sialic acid from the donor of substrate CMP-sialic acid to galactose containing acceptor substrates. Has alpha-2,6-sialyltransferase activity toward oligosaccharides that have the Gal-beta-1,4-GlcNAc sequence at the non-reducing end of their carbohydrate groups, but it has weak or no activities toward glycoproteins and glycolipids. The protein is Beta-galactoside alpha-2,6-sialyltransferase 2 (St6gal2) of Rattus norvegicus (Rat).